We begin with the raw amino-acid sequence, 362 residues long: Cytochrome P450 monooxygenase-like protein avaN (362 aa).

The helical transmembrane segment at 3-23 threads the bilayer; sequence VILAIFIAAAGCLFSSWRIYW.

This sequence belongs to the cytochrome P450 family.

Its subcellular location is the membrane. The protein operates within secondary metabolite biosynthesis. Cytochrome P450 monooxygenase-like protein; part of the cluster that mediates the biosynthesis of a highly modified cyclo-arginine-tryptophan dipeptide (cRW). The first step of the pathway is perfornmed by the arginine-containing cyclodipeptide synthase (RCPDS) avaA that acts as the scaffold-generating enzyme and is responsible for formation of the cyclo-Arg-Trp (cRW) diketopiperazine. AvaB then acts as a multifunctional flavoenzyme that is responsible for generating the cyclo-Arg-formylkynurenine DKP, which can be deformylated by avaC. AvaB then further catalyzes an additional N-oxidation followed by cyclization and dehydration. The next step is an N-acetylation of the guanidine group catalyzed by the arginine N-acetyltransferase avaD. The roles of the additional enzymes identified within the ava cluster still have to be determined. The polypeptide is Cytochrome P450 monooxygenase-like protein avaN (Aspergillus versicolor).